Here is a 467-residue protein sequence, read N- to C-terminus: Cytochrome c-552 (467 aa).

The N-terminal stretch at 1–27 (MMKKMTGKSFALSALVAASFMAAGAMA) is a signal peptide. His-87 contacts heme c. Residues Cys-115, Cys-118, and Lys-119 each coordinate heme. Heme c contacts are provided by Cys-153, Cys-156, His-157, Cys-195, Cys-198, and His-199. Glu-201, Tyr-202, Lys-250, and Gln-252 together coordinate Ca(2+). Tyr-202 serves as a coordination point for substrate. Residue His-253 coordinates substrate. The heme c site is built by His-264, Cys-271, Cys-274, His-275, His-290, Cys-303, Cys-306, His-307, and His-382.

It belongs to the cytochrome c-552 family. Ca(2+) serves as cofactor. It depends on heme c as a cofactor.

It is found in the periplasm. It carries out the reaction 6 Fe(III)-[cytochrome c] + NH4(+) + 2 H2O = 6 Fe(II)-[cytochrome c] + nitrite + 8 H(+). It functions in the pathway nitrogen metabolism; nitrate reduction (assimilation). Catalyzes the reduction of nitrite to ammonia, consuming six electrons in the process. In Shewanella sp. (strain W3-18-1), this protein is Cytochrome c-552.